The following is a 573-amino-acid chain: Proline--tRNA ligase (573 aa).

The protein belongs to the class-II aminoacyl-tRNA synthetase family. ProS type 1 subfamily. Homodimer.

It localises to the cytoplasm. The enzyme catalyses tRNA(Pro) + L-proline + ATP = L-prolyl-tRNA(Pro) + AMP + diphosphate. Functionally, catalyzes the attachment of proline to tRNA(Pro) in a two-step reaction: proline is first activated by ATP to form Pro-AMP and then transferred to the acceptor end of tRNA(Pro). As ProRS can inadvertently accommodate and process non-cognate amino acids such as alanine and cysteine, to avoid such errors it has two additional distinct editing activities against alanine. One activity is designated as 'pretransfer' editing and involves the tRNA(Pro)-independent hydrolysis of activated Ala-AMP. The other activity is designated 'posttransfer' editing and involves deacylation of mischarged Ala-tRNA(Pro). The misacylated Cys-tRNA(Pro) is not edited by ProRS. This Methylobacillus flagellatus (strain ATCC 51484 / DSM 6875 / VKM B-1610 / KT) protein is Proline--tRNA ligase.